Here is a 250-residue protein sequence, read N- to C-terminus: 1-(5-phosphoribosyl)-5-[(5-phosphoribosylamino)methylideneamino] imidazole-4-carboxamide isomerase (250 aa).

Aspartate 10 serves as the catalytic Proton acceptor. The active-site Proton donor is aspartate 131.

Belongs to the HisA/HisF family.

The protein localises to the cytoplasm. It carries out the reaction 1-(5-phospho-beta-D-ribosyl)-5-[(5-phospho-beta-D-ribosylamino)methylideneamino]imidazole-4-carboxamide = 5-[(5-phospho-1-deoxy-D-ribulos-1-ylimino)methylamino]-1-(5-phospho-beta-D-ribosyl)imidazole-4-carboxamide. It participates in amino-acid biosynthesis; L-histidine biosynthesis; L-histidine from 5-phospho-alpha-D-ribose 1-diphosphate: step 4/9. The protein is 1-(5-phosphoribosyl)-5-[(5-phosphoribosylamino)methylideneamino] imidazole-4-carboxamide isomerase of Desulfitobacterium hafniense (strain DSM 10664 / DCB-2).